A 122-amino-acid chain; its full sequence is Putative iron-sulfur cluster insertion protein ErpA (122 aa).

Residues cysteine 50, cysteine 114, and cysteine 116 each contribute to the iron-sulfur cluster site.

Belongs to the HesB/IscA family. As to quaternary structure, homodimer. It depends on iron-sulfur cluster as a cofactor.

In terms of biological role, required for insertion of 4Fe-4S clusters. The polypeptide is Putative iron-sulfur cluster insertion protein ErpA (Burkholderia mallei (strain NCTC 10247)).